A 262-amino-acid polypeptide reads, in one-letter code: Phycoerythrobilin:ferredoxin oxidoreductase (262 aa).

This sequence belongs to the HY2 family.

It catalyses the reaction (3Z)-phycoerythrobilin + oxidized 2[4Fe-4S]-[ferredoxin] = 15,16-dihydrobiliverdin + reduced 2[4Fe-4S]-[ferredoxin] + 2 H(+). In terms of biological role, catalyzes the two-electron reduction of the C2 and C3(1) diene system of 15,16-dihydrobiliverdin. This is Phycoerythrobilin:ferredoxin oxidoreductase from Synechococcus sp. (strain RCC307).